The primary structure comprises 444 residues: Phosphoribosylamine--glycine ligase (444 aa).

The ATP-grasp domain maps to 109 to 324; that stretch reads RNLFKKYEID…FLDVCFAIAE (216 aa). 140 to 202 lines the ATP pocket; sequence MTSLGKDVVV…EEKLVGVEFT (63 aa). Mg(2+) is bound by residues Gln282, Glu294, and Asn296. Mn(2+)-binding residues include Gln282, Glu294, and Asn296.

It belongs to the GARS family. Requires Mg(2+) as cofactor. It depends on Mn(2+) as a cofactor.

It catalyses the reaction 5-phospho-beta-D-ribosylamine + glycine + ATP = N(1)-(5-phospho-beta-D-ribosyl)glycinamide + ADP + phosphate + H(+). It participates in purine metabolism; IMP biosynthesis via de novo pathway; N(1)-(5-phospho-D-ribosyl)glycinamide from 5-phospho-alpha-D-ribose 1-diphosphate: step 2/2. This is Phosphoribosylamine--glycine ligase from Methanococcus maripaludis (strain DSM 14266 / JCM 13030 / NBRC 101832 / S2 / LL).